The sequence spans 327 residues: Malate dehydrogenase (327 aa).

NAD(+) is bound by residues Gly-20–Gly-25 and Asp-44. Residues Arg-93 and Arg-99 each contribute to the substrate site. Residues Asn-106 and Val-129–Asn-131 each bind NAD(+). 2 residues coordinate substrate: Asn-131 and Arg-162. His-186 functions as the Proton acceptor in the catalytic mechanism.

It belongs to the LDH/MDH superfamily. MDH type 3 family.

It carries out the reaction (S)-malate + NAD(+) = oxaloacetate + NADH + H(+). Its function is as follows. Catalyzes the reversible oxidation of malate to oxaloacetate. The sequence is that of Malate dehydrogenase from Nostoc punctiforme (strain ATCC 29133 / PCC 73102).